The primary structure comprises 408 residues: Dicamba O-demethylase 1, ferredoxin reductase component (408 aa).

Residues glycine 14, lysine 49, valine 82, arginine 130, aspartate 279, and valine 298 each contribute to the FAD site.

It belongs to the FAD-dependent oxidoreductase family. Monomer. The dicamba O-demethylase multicomponent enzyme system is composed of an oxygenase component (DdmC) and an electron transfer component formed by a ferredoxin reductase (DdmA1) and a ferredoxin (DdmB). In vitro, dicamba O-demethylase assays in which DdmA2 is substituted for DdmA1 demonstrate that the two enzymes possess nearly identical activities. FAD is required as a cofactor.

It carries out the reaction 2 reduced [2Fe-2S]-[ferredoxin] + NAD(+) + H(+) = 2 oxidized [2Fe-2S]-[ferredoxin] + NADH. Component of the dicamba O-demethylase multicomponent enzyme system involved in the degradation of the herbicide dicamba. In vitro, catalyzes the transfers of electrons from ferredoxin (DdmB) to NADH. Both NADH and NADPH support enzyme activity, with NADH being markedly more effective than NADPH. The chain is Dicamba O-demethylase 1, ferredoxin reductase component from Stenotrophomonas maltophilia (Pseudomonas maltophilia).